We begin with the raw amino-acid sequence, 68 residues long: Large ribosomal subunit protein uL29 (68 aa).

Belongs to the universal ribosomal protein uL29 family.

This is Large ribosomal subunit protein uL29 from Erythrobacter litoralis (strain HTCC2594).